We begin with the raw amino-acid sequence, 185 residues long: MKTAQELRVGNVVQIGSDAWVIAKTEYNKSGRNAAVVKMKMKNLLTNAGQEAVYKADDKFDVVVLDRKEVTYSYFADPMYVFMDADYNQYEVEAEMMGEALNYLEDGMACEVVFYNEKAISVELPTILVREITYTEPAVKGDTSSGKVLKNAKLATGFELQVPLFCNTGDKIEIDTRTNEYRSRA.

The protein belongs to the elongation factor P family.

It is found in the cytoplasm. It participates in protein biosynthesis; polypeptide chain elongation. In terms of biological role, involved in peptide bond synthesis. Stimulates efficient translation and peptide-bond synthesis on native or reconstituted 70S ribosomes in vitro. Probably functions indirectly by altering the affinity of the ribosome for aminoacyl-tRNA, thus increasing their reactivity as acceptors for peptidyl transferase. The protein is Elongation factor P of Burkholderia vietnamiensis (strain G4 / LMG 22486) (Burkholderia cepacia (strain R1808)).